The chain runs to 126 residues: Holo-[acyl-carrier-protein] synthase (126 aa).

Residues Asp-9 and Glu-58 each contribute to the Mg(2+) site.

It belongs to the P-Pant transferase superfamily. AcpS family. The cofactor is Mg(2+).

It localises to the cytoplasm. The catalysed reaction is apo-[ACP] + CoA = holo-[ACP] + adenosine 3',5'-bisphosphate + H(+). Its function is as follows. Transfers the 4'-phosphopantetheine moiety from coenzyme A to a Ser of acyl-carrier-protein. This chain is Holo-[acyl-carrier-protein] synthase, found in Shewanella denitrificans (strain OS217 / ATCC BAA-1090 / DSM 15013).